The primary structure comprises 1463 residues: Chitin binding domain (ChtBD2) containing chtb-1 (1463 aa).

A signal peptide spans 1-17 (MLRNLILITLLVASGHG). The disordered stretch occupies residues 70–99 (SSVPSVPAENTQPQQHPKARKPASPNICEQ). The Chitin-binding type-2 domain occupies 94-164 (PNICEQDNGA…IVPKRMSSLS (71 aa)). Residues C141 and C154 are joined by a disulfide bond. Disordered regions lie at residues 720–773 (IDSD…DFPI) and 841–869 (KNPKKRKTKRRKQKQDENEMEASANFPDS). Over residues 722-734 (SDTNSTTNPSQPE) the composition is skewed to polar residues. 2 stretches are compositionally biased toward basic residues: residues 740-756 (NNTKKSNSSKKHRKPKK) and 843-853 (PKKRKTKRRKQ).

In Caenorhabditis elegans, this protein is Chitin binding domain (ChtBD2) containing chtb-1.